The chain runs to 439 residues: Hydrogenobyrinate a,c-diamide synthase (439 aa).

The region spanning 247-439 (RIALAEDGAF…FFHAIARASA (193 aa)) is the GATase cobBQ-type domain. The active-site Nucleophile is the Cys329.

It belongs to the CobB/CbiA family. It depends on Mg(2+) as a cofactor.

It catalyses the reaction hydrogenobyrinate + 2 L-glutamine + 2 ATP + 2 H2O = hydrogenobyrinate a,c-diamide + 2 L-glutamate + 2 ADP + 2 phosphate + 2 H(+). Its pathway is cofactor biosynthesis; adenosylcobalamin biosynthesis; cob(II)yrinate a,c-diamide from precorrin-2 (aerobic route): step 9/10. Its function is as follows. Catalyzes the ATP-dependent amidation of the two carboxylate groups at positions a and c of hydrogenobyrinate, using either L-glutamine or ammonia as the nitrogen source. The polypeptide is Hydrogenobyrinate a,c-diamide synthase (Mesorhizobium japonicum (strain LMG 29417 / CECT 9101 / MAFF 303099) (Mesorhizobium loti (strain MAFF 303099))).